A 412-amino-acid polypeptide reads, in one-letter code: Thyroxine-binding globulin (412 aa).

An N-terminal signal peptide occupies residues 1–16 (MPLFFSLVLLILGLHC). Asn-35, Asn-98, Asn-164, and Asn-252 each carry an N-linked (GlcNAc...) asparagine glycan. The thyroxine site is built by Asn-292 and Lys-395.

The protein belongs to the serpin family. Expressed by the liver and secreted in plasma.

The protein localises to the secreted. Functionally, major thyroid hormone transport protein in serum. This chain is Thyroxine-binding globulin (SERPINA7), found in Ovis aries (Sheep).